We begin with the raw amino-acid sequence, 167 residues long: CDP-archaeol synthase (167 aa).

5 consecutive transmembrane segments (helical) span residues 4 to 24, 51 to 71, 80 to 100, 104 to 124, and 139 to 158; these read ILEAFWYILPAYFANSSPVIL, GFLGGLTVGTLIGVIQQIIYP, FKVSFLLALGALVGDLIGSFI, LNLPPGYPAVGLDQWGFLISA, and VLLLLVVTPLIHWGTNVLAY.

Belongs to the CDP-archaeol synthase family. The cofactor is Mg(2+).

Its subcellular location is the cell membrane. It carries out the reaction 2,3-bis-O-(geranylgeranyl)-sn-glycerol 1-phosphate + CTP + H(+) = CDP-2,3-bis-O-(geranylgeranyl)-sn-glycerol + diphosphate. The protein operates within membrane lipid metabolism; glycerophospholipid metabolism. Catalyzes the formation of CDP-2,3-bis-(O-geranylgeranyl)-sn-glycerol (CDP-archaeol) from 2,3-bis-(O-geranylgeranyl)-sn-glycerol 1-phosphate (DGGGP) and CTP. This reaction is the third ether-bond-formation step in the biosynthesis of archaeal membrane lipids. In Pyrococcus furiosus (strain ATCC 43587 / DSM 3638 / JCM 8422 / Vc1), this protein is CDP-archaeol synthase.